An 813-amino-acid polypeptide reads, in one-letter code: Nuclear pore complex protein 5 (813 aa).

This sequence belongs to the nucleoporin Nup84/Nup107 family. As to quaternary structure, part of the nuclear pore complex (NPC). May interact with mdf-1.

It localises to the nucleus. The protein resides in the nuclear pore complex. It is found in the chromosome. Its subcellular location is the centromere. The protein localises to the kinetochore. It localises to the nucleus membrane. In terms of biological role, involved in kinetochore assembly and chromosome segregation during embryonic mitosis. Required for the localization of the NDC80 complex member him-10, the chromosomal passenger complex component air-2 and nuclear pore complex proteins npp-23 and npp-15 to kinetochores during metaphase. Required for npp-23 localization to the nuclear envelope during interphase. Recruits mdf-1, a component of the spindle assembly checkpoint, to the nuclear envelope. Appears dispensable for the assembly of the nuclear pore complex and for nuclear protein import. The chain is Nuclear pore complex protein 5 from Caenorhabditis elegans.